The primary structure comprises 658 residues: Glycine--tRNA ligase beta subunit (658 aa).

It belongs to the class-II aminoacyl-tRNA synthetase family. As to quaternary structure, tetramer of two alpha and two beta subunits.

It is found in the cytoplasm. The catalysed reaction is tRNA(Gly) + glycine + ATP = glycyl-tRNA(Gly) + AMP + diphosphate. This chain is Glycine--tRNA ligase beta subunit, found in Rickettsia bellii (strain OSU 85-389).